The sequence spans 300 residues: Probable phytol kinase, chloroplastic (300 aa).

A chloroplast-targeting transit peptide spans 1–36; sequence MAAARPALPSSPTSLLLARSTSAPDLAARRPRRWLV. A run of 7 helical transmembrane segments spans residues 60-78, 98-118, 122-142, 168-188, 227-247, 254-274, and 276-296; these read LLRDGGATLLVTAGAYSLV, VVHVLSGVFFMASWPLFSNST, FFAAVVPFLNCVRLLTYGLGF, YVIVLLIIVLVFWRDSPIGIV, FISGFLLSALMLSYFSWLGYI, ALGKLVLVALAATVVECIPVT, and VVDDNISVPLATMLVAFLLFG.

This sequence belongs to the polyprenol kinase family.

It localises to the plastid. Its subcellular location is the chloroplast membrane. It catalyses the reaction phytol + CTP = phytyl phosphate + CDP + H(+). Its pathway is cofactor biosynthesis; tocopherol biosynthesis. Functionally, involved in the activation and reutilization of phytol from chlorophyll degradation in plant metabolism, including tocopherol biosynthesis. Catalyzes the conversion of phytol to phytol monophosphate (PMP). The chain is Probable phytol kinase, chloroplastic from Triticum aestivum (Wheat).